Reading from the N-terminus, the 345-residue chain is S-adenosylmethionine:tRNA ribosyltransferase-isomerase (345 aa).

It belongs to the QueA family. Monomer.

The protein resides in the cytoplasm. It catalyses the reaction 7-aminomethyl-7-carbaguanosine(34) in tRNA + S-adenosyl-L-methionine = epoxyqueuosine(34) in tRNA + adenine + L-methionine + 2 H(+). Its pathway is tRNA modification; tRNA-queuosine biosynthesis. Transfers and isomerizes the ribose moiety from AdoMet to the 7-aminomethyl group of 7-deazaguanine (preQ1-tRNA) to give epoxyqueuosine (oQ-tRNA). The sequence is that of S-adenosylmethionine:tRNA ribosyltransferase-isomerase from Shewanella sp. (strain MR-4).